Consider the following 385-residue polypeptide: Enoyl-[acyl-carrier-protein] reductase, mitochondrial (385 aa).

Tyr-78 serves as the catalytic Proton donor. NADP(+) contacts are provided by residues Asn-162, 190 to 193 (TSGV), 213 to 215 (RDR), 288 to 291 (YGGM), 313 to 315 (YWV), and Lys-378.

Belongs to the zinc-containing alcohol dehydrogenase family. Quinone oxidoreductase subfamily. As to quaternary structure, homodimer.

It localises to the mitochondrion matrix. The catalysed reaction is a 2,3-saturated acyl-[ACP] + NADP(+) = a (2E)-enoyl-[ACP] + NADPH + H(+). In terms of biological role, catalyzes the NADPH-dependent reduction of trans-2-enoyl thioesters in mitochondrial fatty acid synthesis (fatty acid synthesis type II). Fatty acid chain elongation in mitochondria uses acyl carrier protein (ACP) as an acyl group carrier, but the enzyme accepts both ACP and CoA thioesters as substrates in vitro. Required for respiration and the maintenance of the mitochondrial compartment. The chain is Enoyl-[acyl-carrier-protein] reductase, mitochondrial (ETR1) from Candida glabrata (strain ATCC 2001 / BCRC 20586 / JCM 3761 / NBRC 0622 / NRRL Y-65 / CBS 138) (Yeast).